The primary structure comprises 165 residues: MSTLINGTSLGNLLIVTGSFILLLLLVKKFAWSQLAAIFKAREEKIAKDIDDAENSRQNAQVLENKRQVELNQAKDEAAQIIDNAKETGKAQESKIITEAHEEAGRLKDKANQDIATSKAEALSSVKADVADLSVLLAEKIMAKNLDKTAQGDLIDSYLDKLGDA.

A helical membrane pass occupies residues 7 to 27; sequence GTSLGNLLIVTGSFILLLLLV.

The protein belongs to the ATPase B chain family. As to quaternary structure, F-type ATPases have 2 components, F(1) - the catalytic core - and F(0) - the membrane proton channel. F(1) has five subunits: alpha(3), beta(3), gamma(1), delta(1), epsilon(1). F(0) has three main subunits: a(1), b(2) and c(10-14). The alpha and beta chains form an alternating ring which encloses part of the gamma chain. F(1) is attached to F(0) by a central stalk formed by the gamma and epsilon chains, while a peripheral stalk is formed by the delta and b chains.

It localises to the cell membrane. Functionally, f(1)F(0) ATP synthase produces ATP from ADP in the presence of a proton or sodium gradient. F-type ATPases consist of two structural domains, F(1) containing the extramembraneous catalytic core and F(0) containing the membrane proton channel, linked together by a central stalk and a peripheral stalk. During catalysis, ATP synthesis in the catalytic domain of F(1) is coupled via a rotary mechanism of the central stalk subunits to proton translocation. Its function is as follows. Component of the F(0) channel, it forms part of the peripheral stalk, linking F(1) to F(0). This Streptococcus mutans serotype c (strain ATCC 700610 / UA159) protein is ATP synthase subunit b.